Consider the following 69-residue polypeptide: Toxin Lc a (69 aa).

4 cysteine pairs are disulfide-bonded: Cys3–Cys20, Cys13–Cys41, Cys45–Cys56, and Cys57–Cys62.

Belongs to the three-finger toxin family. Long-chain subfamily. Type II alpha-neurotoxin sub-subfamily. As to expression, expressed by the venom gland.

It is found in the secreted. Its function is as follows. Binds with high affinity to muscular nicotinic acetylcholine receptors (nAChRs), whereas it binds with a low affinity to neuronal alpha-7/CHRNA7 nAChRs. This chain is Toxin Lc a, found in Laticauda colubrina (Yellow-lipped sea krait).